The following is a 106-amino-acid chain: uncharacterized protein (106 aa).

The disordered stretch occupies residues 38–106 (KGNKKSKAAT…STHLPYHGSY (69 aa)). 2 stretches are compositionally biased toward basic and acidic residues: residues 57–71 (TRQE…HRPE) and 82–96 (WKKE…KETS).

It localises to the mitochondrion. This is an uncharacterized protein from Arabidopsis thaliana (Mouse-ear cress).